A 413-amino-acid polypeptide reads, in one-letter code: Multifunctional CCA protein (413 aa).

ATP contacts are provided by glycine 8 and arginine 11. CTP contacts are provided by glycine 8 and arginine 11. The Mg(2+) site is built by aspartate 21 and aspartate 23. ATP-binding residues include arginine 91, arginine 137, and arginine 140. Arginine 91, arginine 137, and arginine 140 together coordinate CTP. Positions 228 to 329 (TGLHTLMTVT…VKLFDSIDAW (102 aa)) constitute an HD domain.

It belongs to the tRNA nucleotidyltransferase/poly(A) polymerase family. Bacterial CCA-adding enzyme type 1 subfamily. Monomer. Can also form homodimers and oligomers. The cofactor is Mg(2+). Ni(2+) serves as cofactor.

It carries out the reaction a tRNA precursor + 2 CTP + ATP = a tRNA with a 3' CCA end + 3 diphosphate. The catalysed reaction is a tRNA with a 3' CCA end + 2 CTP + ATP = a tRNA with a 3' CCACCA end + 3 diphosphate. Catalyzes the addition and repair of the essential 3'-terminal CCA sequence in tRNAs without using a nucleic acid template. Adds these three nucleotides in the order of C, C, and A to the tRNA nucleotide-73, using CTP and ATP as substrates and producing inorganic pyrophosphate. tRNA 3'-terminal CCA addition is required both for tRNA processing and repair. Also involved in tRNA surveillance by mediating tandem CCA addition to generate a CCACCA at the 3' terminus of unstable tRNAs. While stable tRNAs receive only 3'-terminal CCA, unstable tRNAs are marked with CCACCA and rapidly degraded. The protein is Multifunctional CCA protein of Klebsiella pneumoniae subsp. pneumoniae (strain ATCC 700721 / MGH 78578).